The primary structure comprises 327 residues: Ribonucleoside-diphosphate reductase small chain (327 aa).

Fe cation contacts are provided by Asp70, Glu101, and His104. Tyr108 is an active-site residue. The Fe cation site is built by Glu164, Glu198, and His201.

This sequence belongs to the ribonucleoside diphosphate reductase small chain family. As to quaternary structure, heterotetramer composed of a homodimer of the large subunit (R1) and a homodimer of the small subunit (R2). Larger multisubunit protein complex are also active, composed of (R1)n(R2)n. Fe cation is required as a cofactor.

The enzyme catalyses a 2'-deoxyribonucleoside 5'-diphosphate + [thioredoxin]-disulfide + H2O = a ribonucleoside 5'-diphosphate + [thioredoxin]-dithiol. Ribonucleoside-diphosphate reductase holoenzyme provides the precursors necessary for viral DNA synthesis. Allows virus growth in non-dividing cells. Catalyzes the biosynthesis of deoxyribonucleotides from the corresponding ribonucleotides. In Ornithodoros (relapsing fever ticks), this protein is Ribonucleoside-diphosphate reductase small chain.